Here is a 1450-residue protein sequence, read N- to C-terminus: DNA-directed RNA polymerase III subunit rpc1 (1450 aa).

The Zn(2+) site is built by Cys-67, Cys-70, Cys-77, His-80, Cys-107, Cys-110, and Cys-154. Mg(2+)-binding residues include Asp-491, Asp-493, and Asp-495. The segment at Pro-832–Glu-844 is bridging helix.

Belongs to the RNA polymerase beta' chain family. Component of the RNA polymerase III (Pol III) complex consisting of 17 subunits.

It localises to the nucleus. It catalyses the reaction RNA(n) + a ribonucleoside 5'-triphosphate = RNA(n+1) + diphosphate. Functionally, DNA-dependent RNA polymerase catalyzes the transcription of DNA into RNA using the four ribonucleoside triphosphates as substrates. Largest and catalytic core component of RNA polymerase III which synthesizes small RNAs, such as 5S rRNA and tRNAs. Forms the polymerase active center together with the second largest subunit. A single-stranded DNA template strand of the promoter is positioned within the central active site cleft of Pol III. A bridging helix emanates from RPC1 and crosses the cleft near the catalytic site and is thought to promote translocation of Pol III by acting as a ratchet that moves the RNA-DNA hybrid through the active site by switching from straight to bent conformations at each step of nucleotide addition. This Dictyostelium discoideum (Social amoeba) protein is DNA-directed RNA polymerase III subunit rpc1 (polr3a).